The following is a 291-amino-acid chain: Putative transport permease ycf38 (291 aa).

Helical transmembrane passes span 47–67 (ATLM…GGLF), 87–107 (SGII…PLMF), 135–155 (FMTC…LFMG), 165–185 (MIFG…SLAL), 195–215 (LLAF…ALAP), and 262–282 (ICLG…AYLV). Positions 47 to 289 (ATLMAGIIQP…YLVSNILKAK (243 aa)) constitute an ABC transmembrane type-2 domain.

This sequence belongs to the ABC-2 integral membrane protein family.

It localises to the plastid. The protein resides in the chloroplast membrane. This Pyropia yezoensis (Susabi-nori) protein is Putative transport permease ycf38 (ycf38).